The chain runs to 634 residues: Protein IcfG (634 aa).

One can recognise an HAMP domain in the interval 306–361; that stretch reads HHSTVPILDLTKASQAIAAGDLDYEININQGNRQDEIGILGNSFIYMKNQIKTLIA. A PPM-type phosphatase domain is found at 385–633; it reads PISLPDLQQW…DDITMIAVYR (249 aa).

Involved in cross-regulation of inorganic carbon and glucose metabolisms. The polypeptide is Protein IcfG (icfG) (Synechocystis sp. (strain ATCC 27184 / PCC 6803 / Kazusa)).